A 273-amino-acid chain; its full sequence is NH(3)-dependent NAD(+) synthetase (273 aa).

Gly-34–Ser-41 contacts ATP. Asp-40 contacts Mg(2+). Arg-116 is a binding site for deamido-NAD(+). Thr-136 is an ATP binding site. Glu-141 is a Mg(2+) binding site. Residues Lys-165 and Ser-187 each coordinate ATP.

Belongs to the NAD synthetase family. Homodimer.

It catalyses the reaction deamido-NAD(+) + NH4(+) + ATP = AMP + diphosphate + NAD(+) + H(+). The protein operates within cofactor biosynthesis; NAD(+) biosynthesis; NAD(+) from deamido-NAD(+) (ammonia route): step 1/1. Functionally, catalyzes the ATP-dependent amidation of deamido-NAD to form NAD. Uses ammonia as a nitrogen source. The protein is NH(3)-dependent NAD(+) synthetase of Trichlorobacter lovleyi (strain ATCC BAA-1151 / DSM 17278 / SZ) (Geobacter lovleyi).